Here is a 372-residue protein sequence, read N- to C-terminus: 4-hydroxy-3-methylbut-2-en-1-yl diphosphate synthase (flavodoxin) (372 aa).

Cysteine 270, cysteine 273, cysteine 305, and glutamate 312 together coordinate [4Fe-4S] cluster.

The protein belongs to the IspG family. [4Fe-4S] cluster is required as a cofactor.

The enzyme catalyses (2E)-4-hydroxy-3-methylbut-2-enyl diphosphate + oxidized [flavodoxin] + H2O + 2 H(+) = 2-C-methyl-D-erythritol 2,4-cyclic diphosphate + reduced [flavodoxin]. It functions in the pathway isoprenoid biosynthesis; isopentenyl diphosphate biosynthesis via DXP pathway; isopentenyl diphosphate from 1-deoxy-D-xylulose 5-phosphate: step 5/6. Converts 2C-methyl-D-erythritol 2,4-cyclodiphosphate (ME-2,4cPP) into 1-hydroxy-2-methyl-2-(E)-butenyl 4-diphosphate. The protein is 4-hydroxy-3-methylbut-2-en-1-yl diphosphate synthase (flavodoxin) of Aliivibrio fischeri (strain ATCC 700601 / ES114) (Vibrio fischeri).